The following is a 285-amino-acid chain: Type II secretion system protein C (285 aa).

At 1-27 (MARLQAFKDPSFHSLVATFRSLPLIRR) the chain is on the cytoplasmic side. Residues 28–48 (FVLGLILLLICQQLAVLTWRF) form a helical membrane-spanning segment. Residues 49–285 (LLPEDSRIVG…DIYLALDGDH (237 aa)) are Periplasmic-facing.

This sequence belongs to the GSP C family.

The protein localises to the cell inner membrane. Involved in a type II secretion system (T2SS, formerly general secretion pathway, GSP) for the export of proteins. Required for the translocation of the multiple pectic enzymes. This chain is Type II secretion system protein C (outC), found in Pectobacterium carotovorum subsp. carotovorum (Erwinia carotovora subsp. carotovora).